The primary structure comprises 151 residues: Protein Turandot Z (151 aa).

A signal peptide spans 1–23 (MSRLIHLSFVLALLACLTGPISA).

This sequence belongs to the Turandot family.

Its subcellular location is the secreted. In terms of biological role, a humoral factor that may play a role in stress tolerance. In Drosophila pseudoobscura pseudoobscura (Fruit fly), this protein is Protein Turandot Z.